A 426-amino-acid chain; its full sequence is Putative 3-oxoacyl-[acyl-carrier-protein] synthase, mitochondrial (426 aa).

The N-terminal 18 residues, 1-18 (MKRVVITGLGAVTPLGNG), are a transit peptide targeting the mitochondrion. Positions 19-423 (VKTNWRNLIQ…GTNASLCFKK (405 aa)) constitute a Ketosynthase family 3 (KS3) domain. Residues cysteine 170, histidine 311, and histidine 351 each act as for beta-ketoacyl synthase activity in the active site.

It belongs to the thiolase-like superfamily. Beta-ketoacyl-ACP synthases family.

Its subcellular location is the mitochondrion. The enzyme catalyses a fatty acyl-[ACP] + malonyl-[ACP] + H(+) = a 3-oxoacyl-[ACP] + holo-[ACP] + CO2. It catalyses the reaction butanoyl-[ACP] + malonyl-[ACP] + H(+) = 3-oxohexanoyl-[ACP] + holo-[ACP] + CO2. It carries out the reaction hexanoyl-[ACP] + malonyl-[ACP] + H(+) = 3-oxooctanoyl-[ACP] + holo-[ACP] + CO2. The catalysed reaction is octanoyl-[ACP] + malonyl-[ACP] + H(+) = 3-oxodecanoyl-[ACP] + holo-[ACP] + CO2. The enzyme catalyses decanoyl-[ACP] + malonyl-[ACP] + H(+) = 3-oxododecanoyl-[ACP] + holo-[ACP] + CO2. It catalyses the reaction dodecanoyl-[ACP] + malonyl-[ACP] + H(+) = 3-oxotetradecanoyl-[ACP] + holo-[ACP] + CO2. It carries out the reaction tetradecanoyl-[ACP] + malonyl-[ACP] + H(+) = 3-oxohexadecanoyl-[ACP] + holo-[ACP] + CO2. It participates in lipid metabolism; fatty acid biosynthesis. May play a role in the biosynthesis of lipoic acid as well as longer chain fatty acids required for optimal mitochondrial function. The protein is Putative 3-oxoacyl-[acyl-carrier-protein] synthase, mitochondrial of Schizosaccharomyces pombe (strain 972 / ATCC 24843) (Fission yeast).